A 204-amino-acid chain; its full sequence is Guanylate kinase (204 aa).

The Guanylate kinase-like domain occupies 4-182; sequence GLLYVISAPS…ALNQLRAIVQ (179 aa). ATP is bound at residue 11-18; that stretch reads APSGAGKT.

The protein belongs to the guanylate kinase family.

Its subcellular location is the cytoplasm. The catalysed reaction is GMP + ATP = GDP + ADP. Essential for recycling GMP and indirectly, cGMP. This is Guanylate kinase from Methylococcus capsulatus (strain ATCC 33009 / NCIMB 11132 / Bath).